The primary structure comprises 213 residues: uncharacterized protein (213 aa).

Positions 53, 74, and 97 each coordinate S-adenosyl-L-methionine.

Belongs to the methyltransferase superfamily. YrrT family.

Could be a S-adenosyl-L-methionine-dependent methyltransferase. This is an uncharacterized protein from Bacillus subtilis (strain 168).